Reading from the N-terminus, the 544-residue chain is MFGGQQPILVLSQNTKRESGRKVQLENIQAGKAIADVIRTCLGPQAMLKMLMDPMGGIVMTNDGNAILREITVQHPAAKSMIEIARTQDEEVGDGTTSVIVLAGEMLAAAEPFLQQQIHPTVIIRAYREALEDIVGHLQSQLSIQLDVKDKAKMADVVKACVGTKFIGKWSDLAVKIALDAVETVTLSENGRLEVDIKRYAKVEKIPGGAIEESCVLKGVMINKDVTHPKMRRLIENPRIVLLDCSLEYKKGESQTNVEIIGEQDFTRMLQIEEEFVQRICADIIAVKPDLVFTEKGVSDLAQHYLLKAGITAIRRLRKTDNLRIARACGATIVNRTEELTEKDVGTGAGLFEVKKIGDEYFTFVTECKEPKACTILLRGASKDILNETERNLQDALHVARNLVLEPRLVAGGGAVEMAASQLLTRKQVKGPYTAVAHALEIIPRTLAQNCGANTIRALTALRAKHASHTGDGVCAWGIDGESGEIVDMNVKNIWEPLAVKLQTYKTAVETAILLLRIDDIVSGSKKRGGNEPTNPAAMAQGQE.

Cys-368 and Cys-374 are joined by a disulfide. The interval 525 to 544 is disordered; it reads SKKRGGNEPTNPAAMAQGQE.

Belongs to the TCP-1 chaperonin family. In terms of assembly, heterooligomeric complex of about 850 to 900 kDa that forms two stacked rings, 12 to 16 nm in diameter.

Its subcellular location is the cytoplasm. Molecular chaperone; assists the folding of proteins upon ATP hydrolysis. Known to play a role, in vitro, in the folding of actin and tubulin. This chain is T-complex protein 1 subunit gamma, found in Drosophila melanogaster (Fruit fly).